We begin with the raw amino-acid sequence, 507 residues long: Dolichyl pyrophosphate Man9GlcNAc2 alpha-1,3-glucosyltransferase (507 aa).

At 1–3 the chain is on the cytoplasmic side; sequence MEK. The chain crosses the membrane as a helical span at residues 4–24; it reads WYLMTVVVLIGLTVRWTVSLN. Residues 25-114 are Lumenal-facing; the sequence is SYSGAGKPPM…SQAHKLFMRT (90 aa). N-linked (GlcNAc...) asparagine glycosylation occurs at N59. A helical membrane pass occupies residues 115-135; the sequence is TVLIADLLIYIPAVVLYCCCL. Topologically, residues 136–143 are cytoplasmic; sequence KEISTKKK. Residues 144-164 form a helical membrane-spanning segment; sequence IANALCILLYPGLILIDYGHF. The Lumenal portion of the chain corresponds to 165 to 172; it reads QYNSVSLG. Residues 173–193 traverse the membrane as a helical segment; it reads FALWGVLGISCDCDLLGSLAF. Residues 194 to 226 are Cytoplasmic-facing; sequence CLAINYKQMELYHALPFFCFLLGKCFKKGLKGK. Residues 227-247 traverse the membrane as a helical segment; that stretch reads GFVLLVKLACIVVASFVLCWL. Topologically, residues 248 to 297 are lumenal; that stretch reads PFFTEREQTLQVLRRLFPVDRGLFEDKVANIWCSFNVFLKIKDILPRHIQ. Residues 298 to 318 traverse the membrane as a helical segment; sequence LIMSFCFTFLSLLPACIKLIL. Residues 319 to 323 are Cytoplasmic-facing; that stretch reads QPSSK. Residues 324–344 form a helical membrane-spanning segment; it reads GFKFTLVSCALSFFLFSFQVH. At 345–361 the chain is on the lumenal side; that stretch reads EKSILLVSLPVCLVLSE. A helical membrane pass occupies residues 362-382; that stretch reads IPFMSTWFLLVSTFSMLPLLL. Residues 383-387 lie on the Cytoplasmic side of the membrane; that stretch reads KDELL. Residues 388–408 form a helical membrane-spanning segment; the sequence is MPSVVTTMAFFIACVTSFSIF. Residues 409–437 are Lumenal-facing; it reads EKTSEEELQLKSFSISVRKYLPCFTFLSR. The chain crosses the membrane as a helical span at residues 438-458; the sequence is IIQYLFLISVITMVLLTLMTV. The Cytoplasmic segment spans residues 459-473; that stretch reads TLGPPQKLPDLFSVL. Residues 474 to 494 traverse the membrane as a helical segment; the sequence is VCFVSCLNFLFFLVYFNIIIV. Over 495–507 the chain is Lumenal; that stretch reads WDSKSGRNQKKIS.

This sequence belongs to the ALG6/ALG8 glucosyltransferase family.

It localises to the endoplasmic reticulum membrane. The catalysed reaction is an alpha-D-Man-(1-&gt;2)-alpha-D-Man-(1-&gt;2)-alpha-D-Man-(1-&gt;3)-[alpha-D-Man-(1-&gt;2)-alpha-D-Man-(1-&gt;3)-[alpha-D-Man-(1-&gt;2)-alpha-D-Man-(1-&gt;6)]-alpha-D-Man-(1-&gt;6)]-beta-D-Man-(1-&gt;4)-beta-D-GlcNAc-(1-&gt;4)-alpha-D-GlcNAc-diphospho-di-trans,poly-cis-dolichol + a di-trans,poly-cis-dolichyl beta-D-glucosyl phosphate = an alpha-D-Glc-(1-&gt;3)-alpha-D-Man-(1-&gt;2)-alpha-D-Man-(1-&gt;2)-alpha-D-Man-(1-&gt;3)-[alpha-D-Man-(1-&gt;2)-alpha-D-Man-(1-&gt;3)-[alpha-D-Man-(1-&gt;2)-alpha-D-Man-(1-&gt;6)]-alpha-D-Man-(1-&gt;6)]-beta-D-Man-(1-&gt;4)-beta-D-GlcNAc-(1-&gt;4)-alpha-D-GlcNAc-diphospho-di-trans,poly-cis-dolichol + a di-trans,poly-cis-dolichyl phosphate + H(+). It functions in the pathway protein modification; protein glycosylation. Functionally, dolichyl pyrophosphate Man9GlcNAc2 alpha-1,3-glucosyltransferase that operates in the biosynthetic pathway of dolichol-linked oligosaccharides, the glycan precursors employed in protein asparagine (N)-glycosylation. The assembly of dolichol-linked oligosaccharides begins on the cytosolic side of the endoplasmic reticulum membrane and finishes in its lumen. The sequential addition of sugars to dolichol pyrophosphate produces dolichol-linked oligosaccharides containing fourteen sugars, including two GlcNAcs, nine mannoses and three glucoses. Once assembled, the oligosaccharide is transferred from the lipid to nascent proteins by oligosaccharyltransferases. In the lumen of the endoplasmic reticulum, adds the first glucose residue from dolichyl phosphate glucose (Dol-P-Glc) onto the lipid-linked oligosaccharide intermediate Man(9)GlcNAc(2)-PP-Dol to produce Glc(1)Man(9)GlcNAc(2)-PP-Dol. Glc(1)Man(9)GlcNAc(2)-PP-Dol is a substrate for ALG8, the following enzyme in the biosynthetic pathway. The protein is Dolichyl pyrophosphate Man9GlcNAc2 alpha-1,3-glucosyltransferase of Pongo abelii (Sumatran orangutan).